Consider the following 179-residue polypeptide: Dual-action ribosomal maturation protein DarP (179 aa).

Belongs to the DarP family.

The protein resides in the cytoplasm. In terms of biological role, member of a network of 50S ribosomal subunit biogenesis factors which assembles along the 30S-50S interface, preventing incorrect 23S rRNA structures from forming. Promotes peptidyl transferase center (PTC) maturation. This Erwinia tasmaniensis (strain DSM 17950 / CFBP 7177 / CIP 109463 / NCPPB 4357 / Et1/99) protein is Dual-action ribosomal maturation protein DarP.